The following is a 293-amino-acid chain: Ribosomal RNA small subunit methyltransferase A (293 aa).

Residues N33, V35, G60, E81, D111, and N130 each contribute to the S-adenosyl-L-methionine site.

The protein belongs to the class I-like SAM-binding methyltransferase superfamily. rRNA adenine N(6)-methyltransferase family. RsmA subfamily.

Its subcellular location is the cytoplasm. The catalysed reaction is adenosine(1518)/adenosine(1519) in 16S rRNA + 4 S-adenosyl-L-methionine = N(6)-dimethyladenosine(1518)/N(6)-dimethyladenosine(1519) in 16S rRNA + 4 S-adenosyl-L-homocysteine + 4 H(+). Functionally, specifically dimethylates two adjacent adenosines (A1518 and A1519) in the loop of a conserved hairpin near the 3'-end of 16S rRNA in the 30S particle. May play a critical role in biogenesis of 30S subunits. In Corynebacterium glutamicum (strain ATCC 13032 / DSM 20300 / JCM 1318 / BCRC 11384 / CCUG 27702 / LMG 3730 / NBRC 12168 / NCIMB 10025 / NRRL B-2784 / 534), this protein is Ribosomal RNA small subunit methyltransferase A.